A 647-amino-acid polypeptide reads, in one-letter code: Carboxypeptidase Z (647 aa).

Residues 1 to 18 form the signal peptide; the sequence is MVPSLLLLLTGLFRATEP. Positions 35 to 157 constitute an FZ domain; that stretch reads AQKAKCVDIS…AGEEEGCFDP (123 aa). 5 cysteine pairs are disulfide-bonded: Cys-40-Cys-106, Cys-48-Cys-99, Cys-90-Cys-126, Cys-115-Cys-154, and Cys-119-Cys-143. One can recognise a Peptidase M14 domain in the interval 183 to 499; the sequence is KHHSYSQMVS…DALLNYMEMV (317 aa). His-245 and Glu-248 together coordinate Zn(2+). Residue Asn-278 is glycosylated (N-linked (GlcNAc...) asparagine). Zn(2+) is bound at residue His-377. The active-site Proton donor/acceptor is the Glu-469.

The protein belongs to the peptidase M14 family. As to quaternary structure, interacts with WNT4 vie its FZ domain. The cofactor is Zn(2+). In the early embryo it is initially expressed throughout the somites and subsequently becomes restricted to the sclerotome. Expressed in somites, paraxial head mesoderm and apical ectodermal ridge.

The protein resides in the secreted. It is found in the extracellular space. It localises to the extracellular matrix. With respect to regulation, inhibited by 2-mercaptomethyl-3-guanidinoethylthiopropanoic acid (MGTA) and guanidinoethylmercaptosuccinic acid (GEMSA). Inhibited by chelating agents such as EDTA and EGTA. Cleaves substrates with C-terminal arginine residues. Modulates the Wnt signaling pathway, probably by cleaving some undefined protein. Regulates the development of skeletal elements during development, probably by activating WNT4. The polypeptide is Carboxypeptidase Z (CPZ) (Gallus gallus (Chicken)).